Here is a 311-residue protein sequence, read N- to C-terminus: MVSVSEIRKAQRAEGPATILAIGTANPANKVEQATYPDFYFKITNSEHKVELKEKFQRMCDKSMIKSRYMYLTEEILKENPSVCEYMAPSLDARQDMVVVEVPRLGKEAAVKAIKEWGQPKSKITHLIFCTTSGVDMPGADYQLTKLLGLRPYVKRYMMYQQGCFAGGTVLRLAKDLAENNKGARVLVVCSEVTAVTFRGPSDTHLDSLVGQALFGDGAAALIVGSDPVPEIEKPIFEMVWTAQTIAPDSEGAIDGHLREAGLTFHLLKDVPGIVSKNIDKALVEAFQPLGISDYNSIFWIAHPGGPAILD.

C164 is a catalytic residue.

The protein belongs to the thiolase-like superfamily. Chalcone/stilbene synthases family.

The enzyme catalyses (E)-4-coumaroyl-CoA + 3 malonyl-CoA + 3 H(+) = 2',4,4',6'-tetrahydroxychalcone + 3 CO2 + 4 CoA. Its pathway is secondary metabolite biosynthesis; flavonoid biosynthesis. In terms of biological role, the primary product of this enzyme is 4,2',4',6'-tetrahydroxychalcone (also termed naringenin-chalcone or chalcone) which can under specific conditions spontaneously isomerize into naringenin. The polypeptide is Chalcone synthase 4 (CHS4) (Trifolium subterraneum (Subterranean clover)).